The following is a 605-amino-acid chain: Pyruvate decarboxylase 2 (605 aa).

Substrate is bound by residues D68 and H155. The segment at 433–515 is thiamine pyrophosphate binding; sequence DSWFNCQKLK…FLINNGGYTI (83 aa). Mg(2+)-binding residues include D483, N510, and G512. E516 provides a ligand contact to substrate.

The protein belongs to the TPP enzyme family. Homotetramer. It depends on a metal cation as a cofactor. Thiamine diphosphate serves as cofactor.

It catalyses the reaction a 2-oxocarboxylate + H(+) = an aldehyde + CO2. The chain is Pyruvate decarboxylase 2 (PDC2) from Oryza sativa subsp. japonica (Rice).